The sequence spans 298 residues: Ribosomal RNA small subunit methyltransferase A (298 aa).

Residues Asn35, Leu37, Gly62, Glu83, Asp108, and Asn133 each contribute to the S-adenosyl-L-methionine site.

The protein belongs to the class I-like SAM-binding methyltransferase superfamily. rRNA adenine N(6)-methyltransferase family. RsmA subfamily.

Its subcellular location is the cytoplasm. It carries out the reaction adenosine(1518)/adenosine(1519) in 16S rRNA + 4 S-adenosyl-L-methionine = N(6)-dimethyladenosine(1518)/N(6)-dimethyladenosine(1519) in 16S rRNA + 4 S-adenosyl-L-homocysteine + 4 H(+). Its function is as follows. Specifically dimethylates two adjacent adenosines (A1518 and A1519) in the loop of a conserved hairpin near the 3'-end of 16S rRNA in the 30S particle. May play a critical role in biogenesis of 30S subunits. In Streptococcus pyogenes serotype M12 (strain MGAS9429), this protein is Ribosomal RNA small subunit methyltransferase A.